Here is a 468-residue protein sequence, read N- to C-terminus: 6-phosphogluconate dehydrogenase, decarboxylating (468 aa).

Residues 10 to 15 (GMAVMG), 33 to 35 (NRS), 74 to 76 (VKA), and asparagine 102 each bind NADP(+). Substrate-binding positions include asparagine 102 and 128–130 (SGG). The active-site Proton acceptor is lysine 183. 186-187 (HN) contributes to the substrate binding site. Catalysis depends on glutamate 190, which acts as the Proton donor. Substrate-binding residues include tyrosine 191, lysine 260, arginine 287, arginine 445, and histidine 451.

It belongs to the 6-phosphogluconate dehydrogenase family. Homodimer.

The catalysed reaction is 6-phospho-D-gluconate + NADP(+) = D-ribulose 5-phosphate + CO2 + NADPH. It participates in carbohydrate degradation; pentose phosphate pathway; D-ribulose 5-phosphate from D-glucose 6-phosphate (oxidative stage): step 3/3. In terms of biological role, catalyzes the oxidative decarboxylation of 6-phosphogluconate to ribulose 5-phosphate and CO(2), with concomitant reduction of NADP to NADPH. The protein is 6-phosphogluconate dehydrogenase, decarboxylating (gnd) of Shigella flexneri.